A 209-amino-acid chain; its full sequence is Ribosomal RNA large subunit methyltransferase E (209 aa).

Positions 63, 65, 83, 99, and 124 each coordinate S-adenosyl-L-methionine. K164 (proton acceptor) is an active-site residue.

This sequence belongs to the class I-like SAM-binding methyltransferase superfamily. RNA methyltransferase RlmE family.

Its subcellular location is the cytoplasm. The catalysed reaction is uridine(2552) in 23S rRNA + S-adenosyl-L-methionine = 2'-O-methyluridine(2552) in 23S rRNA + S-adenosyl-L-homocysteine + H(+). In terms of biological role, specifically methylates the uridine in position 2552 of 23S rRNA at the 2'-O position of the ribose in the fully assembled 50S ribosomal subunit. In Pseudoalteromonas atlantica (strain T6c / ATCC BAA-1087), this protein is Ribosomal RNA large subunit methyltransferase E.